The sequence spans 1666 residues: Atrochrysone carboxylic acid synthase PKS4 (1666 aa).

The Ketosynthase family 3 (KS3) domain maps to Phe-15 to Glu-452. Catalysis depends on for beta-ketoacyl synthase activity residues Cys-194, His-332, and His-372. The interval Ala-555–Arg-863 is malonyl-CoA:ACP transacylase (MAT) domain. Ser-632 functions as the For acyl/malonyl transferase activity in the catalytic mechanism. The interval Arg-905–Leu-1034 is N-terminal hotdog fold. Residues Arg-905–Lys-1206 form the PKS/mFAS DH domain. Residues Leu-935–Tyr-1203 form a product template (PT) domain region. The tract at residues Ser-1050–Lys-1206 is C-terminal hotdog fold. An O-(pantetheine 4'-phosphoryl)serine modification is found at Ser-1269. In terms of domain architecture, Carrier spans Ala-1331 to Val-1395. Positions Pro-1334–Asn-1397 are proline-rich linker region. The tract at residues Thr-1444–Gln-1529 is alpha/beta hydrolase superfamily-type thioesterase (TE) domain.

It catalyses the reaction holo-[ACP] + 8 malonyl-CoA + 8 H(+) = atrochrysone carboxyl-[ACP] + 8 CO2 + 8 CoA + 2 H2O. Its pathway is secondary metabolite biosynthesis. Non-reducing polyketide synthase that synthesizes the universal anthraquinone precursor atrochrysone carboxylic acid from malonyl-CoA. Produces a mixture of both 3R and 3S enantiomers with an excess of the 3S form. PKS4 catalyzes both hepta- and octaketide synthesis and also yields 6-hydroxymusizin, probably via carboxylating activity inherent to the KS domain. The chain is Atrochrysone carboxylic acid synthase PKS4 from Calonarius odorifer (Mushroom).